A 620-amino-acid chain; its full sequence is 1-deoxy-D-xylulose-5-phosphate synthase (620 aa).

Residues His-80 and 121-123 (GHS) contribute to the thiamine diphosphate site. Asp-152 provides a ligand contact to Mg(2+). Thiamine diphosphate-binding positions include 153–154 (GA), Asn-181, Tyr-288, and Glu-370. Residue Asn-181 participates in Mg(2+) binding.

It belongs to the transketolase family. DXPS subfamily. In terms of assembly, homodimer. It depends on Mg(2+) as a cofactor. Thiamine diphosphate is required as a cofactor.

It carries out the reaction D-glyceraldehyde 3-phosphate + pyruvate + H(+) = 1-deoxy-D-xylulose 5-phosphate + CO2. It functions in the pathway metabolic intermediate biosynthesis; 1-deoxy-D-xylulose 5-phosphate biosynthesis; 1-deoxy-D-xylulose 5-phosphate from D-glyceraldehyde 3-phosphate and pyruvate: step 1/1. Functionally, catalyzes the acyloin condensation reaction between C atoms 2 and 3 of pyruvate and glyceraldehyde 3-phosphate to yield 1-deoxy-D-xylulose-5-phosphate (DXP). The sequence is that of 1-deoxy-D-xylulose-5-phosphate synthase from Salmonella typhi.